We begin with the raw amino-acid sequence, 366 residues long: Uroporphyrinogen decarboxylase (366 aa).

Substrate-binding positions include 28–32 (RQAGR), aspartate 78, tyrosine 160, threonine 215, and histidine 333.

This sequence belongs to the uroporphyrinogen decarboxylase family. Homodimer.

The protein localises to the cytoplasm. It catalyses the reaction uroporphyrinogen III + 4 H(+) = coproporphyrinogen III + 4 CO2. It participates in porphyrin-containing compound metabolism; protoporphyrin-IX biosynthesis; coproporphyrinogen-III from 5-aminolevulinate: step 4/4. Catalyzes the decarboxylation of four acetate groups of uroporphyrinogen-III to yield coproporphyrinogen-III. In Paraburkholderia xenovorans (strain LB400), this protein is Uroporphyrinogen decarboxylase.